Here is a 308-residue protein sequence, read N- to C-terminus: MADEKTFRIGFIVLGLFLLSLGTFLMSHDRPQVYGTFYAMGSIMVIGGVLWSMCQCYPKITFVPADSDFQGMLSPKALSLLETGLSEVKSPQPPYVRLWEEAAYDQSLPDFTHIQMKVMGYSEDPRPLLAPELKTGTSSAKEGEPHSAQTWMEAAVVVHRELDEKEGEKSRSQSSPPACSQGSAPLASFHDDLDVGSSEGRSPQPSPPDRDEAHLQVPWASRGPLDRFGDFALIDDTPISEDMGLEGQAQEEALPSKQPWSLRMKEETVQAGAEEPEQEEEDLYYGLPDSPGDPLPDKELGFEPDVQG.

At 1 to 5 the chain is on the cytoplasmic side; that stretch reads MADEK. The interval 1–72 is regulates channel membrane trafficking and anion conductance; sequence MADEKTFRIG…VPADSDFQGM (72 aa). Residues 6–26 form a helical membrane-spanning segment; that stretch reads TFRIGFIVLGLFLLSLGTFLM. The Extracellular portion of the chain corresponds to 27–32; sequence SHDRPQ. Residues 33–53 traverse the membrane as a helical segment; sequence VYGTFYAMGSIMVIGGVLWSM. 2 S-palmitoyl cysteine lipidation sites follow: Cys-54 and Cys-56. Residues 54 to 308 are Cytoplasmic-facing; the sequence is CQCYPKITFV…ELGFEPDVQG (255 aa). Phosphoserine occurs at positions 79 and 107. Disordered stretches follow at residues 127–149 and 162–308; these read PLLAPELKTGTSSAKEGEPHSAQ and LDEK…DVQG. The span at 162 to 171 shows a compositional bias: basic and acidic residues; sequence LDEKEGEKSR. Positions 172 to 183 are enriched in polar residues; that stretch reads SQSSPPACSQGS. Positions 274–283 are enriched in acidic residues; that stretch reads EEPEQEEEDL. A Phosphoserine modification is found at Ser-290.

Interacts with CLCNK channels. Forms heteromers with CLCNKA in the thin ascending limb of Henle and with CLCNKB in the thick ascending limb and more distal segments. Palmitoylation is necessary for activation of plasma membrane-inserted CLC-K/barttin channels. In terms of tissue distribution, expressed along the distal nephron.

The protein localises to the basolateral cell membrane. Functionally, regulatory subunit of anion-selective CLCNKA:BSND and CLCNKB:BSND heteromeric channels involved in basolateral chloride conductance along the nephron to achieve urine concentration and maintain systemic acid-base homeostasis, and in the stria vascularis of the inner ear to establish the endocochlear potential necessary for normal hearing. Most likely acts as a chaperone that allosterically regulates proper sorting of CLCNKA:BSND and CLCNKB:BSND channels at the basolateral plasma membrane domain and functional switch to ion conducting state. Mediates constitutive opening of channel common gates. This chain is Barttin, found in Rattus norvegicus (Rat).